The following is a 527-amino-acid chain: GMP synthase [glutamine-hydrolyzing] (527 aa).

Positions 4 to 202 (KILILDFGSQ…VLKICGAQPD (199 aa)) constitute a Glutamine amidotransferase type-1 domain. C81 functions as the Nucleophile in the catalytic mechanism. Residues H176 and E178 contribute to the active site. In terms of domain architecture, GMPS ATP-PPase spans 203-395 (WEMGHYIDEA…LGLPPAMVYR (193 aa)). 230 to 236 (SGGVDSS) provides a ligand contact to ATP.

Homodimer.

It catalyses the reaction XMP + L-glutamine + ATP + H2O = GMP + L-glutamate + AMP + diphosphate + 2 H(+). The protein operates within purine metabolism; GMP biosynthesis; GMP from XMP (L-Gln route): step 1/1. In terms of biological role, catalyzes the synthesis of GMP from XMP. This chain is GMP synthase [glutamine-hydrolyzing], found in Paraburkholderia xenovorans (strain LB400).